Here is a 158-residue protein sequence, read N- to C-terminus: 2-C-methyl-D-erythritol 2,4-cyclodiphosphate synthase (158 aa).

Residues Asp-9 and His-11 each coordinate a divalent metal cation. 4-CDP-2-C-methyl-D-erythritol 2-phosphate contacts are provided by residues 9-11 and 35-36; these read DVH and HS. Residue His-43 participates in a divalent metal cation binding. Residues 57 to 59, 62 to 66, 133 to 136, Phe-140, and Arg-143 contribute to the 4-CDP-2-C-methyl-D-erythritol 2-phosphate site; these read DIG, FPDTD, and TTTE.

The protein belongs to the IspF family. As to quaternary structure, homotrimer. A divalent metal cation is required as a cofactor.

It carries out the reaction 4-CDP-2-C-methyl-D-erythritol 2-phosphate = 2-C-methyl-D-erythritol 2,4-cyclic diphosphate + CMP. Its pathway is isoprenoid biosynthesis; isopentenyl diphosphate biosynthesis via DXP pathway; isopentenyl diphosphate from 1-deoxy-D-xylulose 5-phosphate: step 4/6. Involved in the biosynthesis of isopentenyl diphosphate (IPP) and dimethylallyl diphosphate (DMAPP), two major building blocks of isoprenoid compounds. Catalyzes the conversion of 4-diphosphocytidyl-2-C-methyl-D-erythritol 2-phosphate (CDP-ME2P) to 2-C-methyl-D-erythritol 2,4-cyclodiphosphate (ME-CPP) with a corresponding release of cytidine 5-monophosphate (CMP). In Actinobacillus pleuropneumoniae serotype 7 (strain AP76), this protein is 2-C-methyl-D-erythritol 2,4-cyclodiphosphate synthase.